A 280-amino-acid chain; its full sequence is Cell envelope integrity protein EipB (280 aa).

The signal sequence occupies residues 1–24 (MRFVRIAAAASGATVFMWAGFAGA). The cysteines at positions 69 and 278 are disulfide-linked.

Monomer.

Its subcellular location is the periplasm. Functions in the periplasm to maintain cell envelope integrity. The polypeptide is Cell envelope integrity protein EipB (Brucella abortus (strain 2308)).